The sequence spans 122 residues: Large ribosomal subunit protein uL14 (122 aa).

Belongs to the universal ribosomal protein uL14 family. In terms of assembly, part of the 50S ribosomal subunit. Forms a cluster with proteins L3 and L19. In the 70S ribosome, L14 and L19 interact and together make contacts with the 16S rRNA in bridges B5 and B8.

Functionally, binds to 23S rRNA. Forms part of two intersubunit bridges in the 70S ribosome. The sequence is that of Large ribosomal subunit protein uL14 from Stutzerimonas stutzeri (strain A1501) (Pseudomonas stutzeri).